We begin with the raw amino-acid sequence, 150 residues long: Protein adenylyltransferase MntA (150 aa).

The GSX(10)DXD motif motif lies at 32–46 (GSRATGNINANSDWD). Catalysis depends on residues aspartate 44 and aspartate 46. Mg(2+)-binding residues include aspartate 44, aspartate 46, and aspartate 86.

It belongs to the MntA antitoxin family. Forms a complex with HepT, probably MntA(1):HepT(2) in vivo; can only be purified when both 'Arg-102' and 'Tyr-109' (or 'His-107' and 'Tyr-109') of HepThave been mutated. The fully di-AMPylated HepT homodimer is not found in a complex with MntA. The cofactor is Mg(2+).

It catalyses the reaction L-tyrosyl-[protein] + ATP = O-(5'-adenylyl)-L-tyrosyl-[protein] + diphosphate. It carries out the reaction O-(5'-adenylyl)-L-tyrosyl-[protein] + ATP = O-[5'-(adenylyl-(5'-&gt;3')-adenylyl)]-L-tyrosyl-[protein] + diphosphate. In terms of biological role, antitoxin component of a type VII toxin-antitoxin (TA) system. Upon cloning in E.coli neutralizes the effect of cognate toxin HepT. Neutralization is mostly due to di-AMPylation of toxin by this enzyme. Successively di-AMPylates HepT on 'Tyr-109'. In vitro will use ATP, dATP, GTP, dGTP, TTP or UTP to generate a mono-modified protein, but requires a purine nucleotide for the second modification reaction (ATP, dATP or GTP). This Aphanizomenon flos-aquae (strain 2012/KM1/D3) protein is Protein adenylyltransferase MntA.